Consider the following 338-residue polypeptide: Fructose-1,6-bisphosphatase class 1 1 (338 aa).

Residues Glu91, Asp113, Leu115, and Asp116 each coordinate Mg(2+). Substrate is bound by residues 116-119, Asn208, and Lys274; that span reads DGSS. Mg(2+) is bound at residue Glu280.

Belongs to the FBPase class 1 family. As to quaternary structure, homotetramer. Requires Mg(2+) as cofactor.

It is found in the cytoplasm. It carries out the reaction beta-D-fructose 1,6-bisphosphate + H2O = beta-D-fructose 6-phosphate + phosphate. Its pathway is carbohydrate biosynthesis; gluconeogenesis. The sequence is that of Fructose-1,6-bisphosphatase class 1 1 from Cupriavidus necator (strain ATCC 17699 / DSM 428 / KCTC 22496 / NCIMB 10442 / H16 / Stanier 337) (Ralstonia eutropha).